An 890-amino-acid polypeptide reads, in one-letter code: Leucine-rich repeat receptor-like tyrosine-protein kinase PXC3 (890 aa).

An N-terminal signal peptide occupies residues 1–23 (MTFWCMSILLIVGFLSKSELCEA). Residues 24–534 (QLSDEATLVA…LRYNHRVSYR (511 aa)) are Extracellular-facing. N-linked (GlcNAc...) asparagine glycans are attached at residues N46, N61, N78, and N108. LRR repeat units lie at residues 67-85 (MLDLSGLQLRGNVTLISDL), 86-108 (RSLKHLDLSGNNFNGRIPTSFGN), 110-132 (SELEFLDLSLNRFVGAIPVEFGK), 133-157 (LRGLRAFNISNNLLVGEIPDELKVL), 159-181 (RLEEFQVSGNGLNGSIPHWVGNL), 182-205 (SSLRVFTAYENDLVGEIPNGLGLV), 206-229 (SELELLNLHSNQLEGKIPKGIFEK), 231-254 (KLKVLVLTQNRLTGELPEAVGICS), 256-276 (LSSIRIGNNELVGVIPRTIGN), 278-300 (SGLTYFEADKNNLSGEIVAEFSK), 301-325 (CSNLTLLNLAANGFAGTIPTELGQL), 326-349 (INLQELILSGNSLFGEIPKSFLGS), 350-373 (GNLNKLDLSNNRLNGTIPKELCSM), 375-397 (RLQYLLLDQNSIRGDIPHEIGNC), 399-421 (KLLQLQLGRNYLTGTIPPEIGRM), 422-446 (RNLQIALNLSFNHLHGSLPPELGKL), 447-469 (DKLVSLDVSNNLLTGSIPPLLKG), and 471-492 (MSLIEVNFSNNLLNGPVPVFVP). N-linked (GlcNAc...) asparagine glycans are attached at residues N140, N171, and N180. Residues N276, N289, and N303 are each glycosylated (N-linked (GlcNAc...) asparagine). N-linked (GlcNAc...) asparagine glycosylation occurs at N363. Residue N429 is glycosylated (N-linked (GlcNAc...) asparagine). 2 N-linked (GlcNAc...) asparagine glycosylation sites follow: N477 and N498. The chain crosses the membrane as a helical span at residues 535-555 (IVLAVIGSGVAVFVSVTVVVL). Over 556 to 890 (LFMMREKQEK…EMLQEVKQIK (335 aa)) the chain is Cytoplasmic. The region spanning 608 to 886 (MKESNKLSTG…KKVVEMLQEV (279 aa)) is the Protein kinase domain. Residues 614–622 (LSTGTFSSV) and K636 each bind ATP. The active-site Proton acceptor is the D735.

Belongs to the protein kinase superfamily. Tyr protein kinase family. In terms of tissue distribution, expressed in the vascular strands of cotyledons, the shoot apex, hypocotyls, roots, leaves, stems and flowers.

The protein resides in the cell membrane. The enzyme catalyses L-tyrosyl-[protein] + ATP = O-phospho-L-tyrosyl-[protein] + ADP + H(+). Its function is as follows. Leucine-rich repeat receptor-like protein kinase that may play a role in vascular tissues development. In Arabidopsis thaliana (Mouse-ear cress), this protein is Leucine-rich repeat receptor-like tyrosine-protein kinase PXC3.